A 274-amino-acid polypeptide reads, in one-letter code: Ribosomal RNA small subunit methyltransferase A (274 aa).

N20, L22, G47, E68, D90, and N110 together coordinate S-adenosyl-L-methionine.

It belongs to the class I-like SAM-binding methyltransferase superfamily. rRNA adenine N(6)-methyltransferase family. RsmA subfamily.

It localises to the cytoplasm. It carries out the reaction adenosine(1518)/adenosine(1519) in 16S rRNA + 4 S-adenosyl-L-methionine = N(6)-dimethyladenosine(1518)/N(6)-dimethyladenosine(1519) in 16S rRNA + 4 S-adenosyl-L-homocysteine + 4 H(+). Specifically dimethylates two adjacent adenosines (A1518 and A1519) in the loop of a conserved hairpin near the 3'-end of 16S rRNA in the 30S particle. May play a critical role in biogenesis of 30S subunits. This Chlorobaculum parvum (strain DSM 263 / NCIMB 8327) (Chlorobium vibrioforme subsp. thiosulfatophilum) protein is Ribosomal RNA small subunit methyltransferase A.